We begin with the raw amino-acid sequence, 538 residues long: Putative outer membrane porin BglH (538 aa).

Residues 1–25 form the signal peptide; it reads MFRRNLITSAILLMAPLAFSAQSLA. The tract at residues 52 to 82 is disordered; the sequence is KDEEKKKYTPATVNRSVSTNDQGYAANPFPT. Over residues 62–73 the composition is skewed to polar residues; sequence ATVNRSVSTNDQ.

It belongs to the porin LamB (TC 1.B.3) family.

It localises to the cell outer membrane. In terms of biological role, may be a sugar porin with a broad carbohydrate specificity. This Shigella sonnei (strain Ss046) protein is Putative outer membrane porin BglH (bglH).